Consider the following 300-residue polypeptide: Beta-lactamase (300 aa).

A signal peptide spans 1-29 (MTMFKTTFRQTATIAVSLISLLVSPMLWA). Ser75 (acyl-ester intermediate) is an active-site residue. Residue 239-241 (KTG) participates in substrate binding.

This sequence belongs to the class-A beta-lactamase family. As to quaternary structure, monomer.

The enzyme catalyses a beta-lactam + H2O = a substituted beta-amino acid. Hydrolyzes broad-spectrum beta-lactam antibiotics. Active against cephalosporins such as cefuroxime and cefotaxime. The polypeptide is Beta-lactamase (blaB) (Proteus vulgaris).